Here is an 86-residue protein sequence, read N- to C-terminus: Mu-theraphotoxin-Hhn1c (86 aa).

Positions 1-21 (MKASMFLALAGLALLFVVCYA) are cleaved as a signal peptide. Positions 22–49 (SESEEKEFSNELLSSVLAVDDNSKGEER) are excised as a propeptide. 3 disulfides stabilise this stretch: cysteine 51–cysteine 66, cysteine 58–cysteine 73, and cysteine 65–cysteine 80. Position 84 is an isoleucine amide (isoleucine 84).

Belongs to the neurotoxin 10 (Hwtx-1) family. 22 (Htx-4) subfamily. As to quaternary structure, monomer. Expressed by the venom gland.

The protein localises to the secreted. Functionally, neurotoxin. Selectively blocks neuronal tetrodotoxin-sensitive voltage-gated sodium channels (Nav). Does not affect tetrodotoxin-resistant voltage-gated sodium channels or calcium channels. The protein is Mu-theraphotoxin-Hhn1c of Cyriopagopus hainanus (Chinese bird spider).